A 147-amino-acid chain; its full sequence is Ribonuclease H (147 aa).

The RNase H type-1 domain maps to 5 to 141 (ARKQITLYSD…CDELARNEAE (137 aa)). Positions 14, 52, 74, and 133 each coordinate Mg(2+).

It belongs to the RNase H family. In terms of assembly, monomer. It depends on Mg(2+) as a cofactor.

The protein localises to the cytoplasm. It catalyses the reaction Endonucleolytic cleavage to 5'-phosphomonoester.. Its function is as follows. Endonuclease that specifically degrades the RNA of RNA-DNA hybrids. In Sulfurovum sp. (strain NBC37-1), this protein is Ribonuclease H.